The following is a 315-amino-acid chain: Glycine--tRNA ligase alpha subunit (315 aa).

The protein belongs to the class-II aminoacyl-tRNA synthetase family. Tetramer of two alpha and two beta subunits.

The protein localises to the cytoplasm. The catalysed reaction is tRNA(Gly) + glycine + ATP = glycyl-tRNA(Gly) + AMP + diphosphate. This chain is Glycine--tRNA ligase alpha subunit, found in Pseudomonas entomophila (strain L48).